The following is a 275-amino-acid chain: T-cell ecto-ADP-ribosyltransferase 2 (275 aa).

The signal sequence occupies residues 1–20 (MPSNICKFFLTWWLIQQVTG). 2 disulfide bridges follow: C41–C243 and C141–C193. Residues 61-238 (AKLKVAWEEA…IFLDSPKRKK (178 aa)) enclose the TR mART core domain. 3 residues coordinate NAD(+): Y98, R146, and Q164. Residue R146 is part of the active site. Residue S167 is part of the active site. Residue S202 participates in NAD(+) binding. The residue at position 204 (R204) is an ADP-ribosylarginine; by autocatalysis. E209 is a catalytic residue. A lipid anchor (GPI-anchor amidated serine) is attached at S246. Positions 247-275 (SAGARESCVSLFLVVLPSLLVQLLCLAEP) are cleaved as a propeptide — removed in mature form.

Belongs to the Arg-specific ADP-ribosyltransferase family. As to expression, postthymic T-cells.

It localises to the cell membrane. The catalysed reaction is L-arginyl-[protein] + NAD(+) = N(omega)-(ADP-D-ribosyl)-L-arginyl-[protein] + nicotinamide + H(+). It carries out the reaction NAD(+) + H2O = ADP-D-ribose + nicotinamide + H(+). Has both NAD(+) glycohydrolase and ADP-ribosyltransferase activity (to a lesser extent). This Rattus norvegicus (Rat) protein is T-cell ecto-ADP-ribosyltransferase 2 (Art2b).